Reading from the N-terminus, the 1172-residue chain is MLEGCILAVSSQSKSAKAITNNSVPGAPNRISFAKLREPLEVPGLLDVQTESFDWLIGADSWRQRATARGDVNPTGGLEEVLTELSPIEDFSGSMSLSFSDPRFDEVKAPVDECKDKDMTYAAPLFVTAEFINNNTGEIKSQTVFMGDFPMMTEKGTFIINGTERVVVSQLVRSPGVYFDESIDKSTEKTLHSVKVIPGRGAWLEFDVDKRDTVGVRIDRKRRQPVTVLLKALGWTNEQITERFGFSEIMMSTLEKDNTAGTDEALLDIYRKLRPGEPPTKESAQTLLENLFFKEKRYDLARVGRYKVNKKLGLNTDKPITSSTLTEEDVVATIEYLVRLHEGQATMTVPGGVEVPVEVDDIDHFGNRRLRTVGELIQNQIRVGLSRMERVVRERMTTQDVEAITPQTLINIRPVVAAIKEFFGTSQLSQFMDQNNPLSGLTHKRRLSALGPGGLSRERAGLEVRDVHSSHYGRMCPIETPEGPNIGLIGSLSVYARVNPFGFIETPYRKVENGVVTDQIDYLTADEEDRHVVAQANSPLDDEGHFTEDRVLVRRKGGEVEFVSATEVDYMDVSPRQMVSVATAMIPFLEHDDANRALMGANMQRQAVPLVRSEAPLVGTGMELRAAIDAGDVVVSEKAGVVEEVSADYITVMADDGTRHTYRMRKFARSNHGTCANQRPIVDAGQRVEAGQVVADGPCTQNGEMALGKNLLVAIMPWEGHNYEDAIILSNRLVEEDVLTSIHIEEHEIDARDTKLGAEEITRDIPNVSDEVLADLDERGIVRIGAEVRDGDILVGKVTPKGETELTPEERLLRAIFGEKAREVRDTSLKVPHGESGKVIGIRVFSREDDDELPAGVNELVRVYVAQKRKISDGDKLAGRHGNKGVIGKILPVEDMPFLPDGTPVDIILNTHGVPRRMNIGQILETHLGWVAKAGWNINVAGADGVPDWAEKLPEELYSAPSDSIVATPVFDGARENELSGLLASTLPNRDGDVMVNEDGKAELFDGRSGEPFPYPVTVGYMYILKLHHLVDDKIHARSTGPYSMITQQPLGGKAQFGGQRFGEMECWAMQAYGAAYTLQELLTIKSDDTVGRVKVYEAIVKGENIPEPGIPESFKVLLKELQSLCLNVEVLSSDGAAIEMRDGDDEDLERAAANLGINLSRNESASVEDLA.

Belongs to the RNA polymerase beta chain family. The RNAP catalytic core consists of 2 alpha, 1 beta, 1 beta' and 1 omega subunit. When a sigma factor is associated with the core the holoenzyme is formed, which can initiate transcription.

It catalyses the reaction RNA(n) + a ribonucleoside 5'-triphosphate = RNA(n+1) + diphosphate. Its function is as follows. DNA-dependent RNA polymerase catalyzes the transcription of DNA into RNA using the four ribonucleoside triphosphates as substrates. This is DNA-directed RNA polymerase subunit beta from Mycobacterium sp. (strain JLS).